A 141-amino-acid polypeptide reads, in one-letter code: Cholinesterase (141 aa).

Asn39 carries N-linked (GlcNAc...) asparagine glycosylation. Residue 49-50 (GG) coordinates substrate. Ser131 acts as the Acyl-ester intermediate in catalysis. Ser131 is subject to Phosphoserine.

The protein belongs to the type-B carboxylesterase/lipase family. Homotetramer; disulfide-linked. Dimer of dimers. Present in most cells except erythrocytes.

The protein resides in the secreted. It carries out the reaction an acylcholine + H2O = a carboxylate + choline + H(+). Functionally, esterase with broad substrate specificity. Contributes to the inactivation of the neurotransmitter acetylcholine. Can degrade neurotoxic organophosphate esters. In Canis lupus familiaris (Dog), this protein is Cholinesterase (BCHE).